The chain runs to 167 residues: Ureidoglycolate lyase (167 aa).

The protein belongs to the ureidoglycolate lyase family. In terms of assembly, homodimer. It depends on Ni(2+) as a cofactor.

It carries out the reaction (S)-ureidoglycolate = urea + glyoxylate. It participates in nitrogen metabolism; (S)-allantoin degradation. In terms of biological role, catalyzes the catabolism of the allantoin degradation intermediate (S)-ureidoglycolate, generating urea and glyoxylate. Involved in the utilization of allantoin as nitrogen source. In Pseudomonas fluorescens (strain ATCC BAA-477 / NRRL B-23932 / Pf-5), this protein is Ureidoglycolate lyase.